We begin with the raw amino-acid sequence, 298 residues long: ATP synthase gamma chain (298 aa).

This sequence belongs to the ATPase gamma chain family. As to quaternary structure, F-type ATPases have 2 components, CF(1) - the catalytic core - and CF(0) - the membrane proton channel. CF(1) has five subunits: alpha(3), beta(3), gamma(1), delta(1), epsilon(1). CF(0) has three main subunits: a, b and c.

It localises to the cell membrane. Produces ATP from ADP in the presence of a proton gradient across the membrane. The gamma chain is believed to be important in regulating ATPase activity and the flow of protons through the CF(0) complex. The sequence is that of ATP synthase gamma chain from Frankia casuarinae (strain DSM 45818 / CECT 9043 / HFP020203 / CcI3).